The chain runs to 220 residues: Small ribosomal subunit protein mS23 (220 aa).

It belongs to the mitochondrion-specific ribosomal protein mS23 family. In terms of assembly, component of the mitochondrial small ribosomal subunit (mt-SSU). Mature yeast 74S mitochondrial ribosomes consist of a small (37S) and a large (54S) subunit. The 37S small subunit contains a 15S ribosomal RNA (15S mt-rRNA) and at least 32 different proteins. The 54S large subunit contains a 21S rRNA (21S mt-rRNA) and at least 45 different proteins.

It is found in the mitochondrion. In terms of biological role, component of the mitochondrial ribosome (mitoribosome), a dedicated translation machinery responsible for the synthesis of mitochondrial genome-encoded proteins, including at least some of the essential transmembrane subunits of the mitochondrial respiratory chain. The mitoribosomes are attached to the mitochondrial inner membrane and translation products are cotranslationally integrated into the membrane. The chain is Small ribosomal subunit protein mS23 (rsm25) from Schizosaccharomyces pombe (strain 972 / ATCC 24843) (Fission yeast).